The sequence spans 265 residues: Thymidylate synthase (265 aa).

A dUMP-binding site is contributed by R21. H51 provides a ligand contact to (6R)-5,10-methylene-5,6,7,8-tetrahydrofolate. Residue R127 to R128 participates in dUMP binding. C147 functions as the Nucleophile in the catalytic mechanism. Residues R167–D170, N178, and H208–Y210 contribute to the dUMP site. Residue D170 participates in (6R)-5,10-methylene-5,6,7,8-tetrahydrofolate binding. A (6R)-5,10-methylene-5,6,7,8-tetrahydrofolate-binding site is contributed by S264.

The protein belongs to the thymidylate synthase family. Bacterial-type ThyA subfamily. Homodimer.

It is found in the cytoplasm. It carries out the reaction dUMP + (6R)-5,10-methylene-5,6,7,8-tetrahydrofolate = 7,8-dihydrofolate + dTMP. Its pathway is pyrimidine metabolism; dTTP biosynthesis. Its function is as follows. Catalyzes the reductive methylation of 2'-deoxyuridine-5'-monophosphate (dUMP) to 2'-deoxythymidine-5'-monophosphate (dTMP) while utilizing 5,10-methylenetetrahydrofolate (mTHF) as the methyl donor and reductant in the reaction, yielding dihydrofolate (DHF) as a by-product. This enzymatic reaction provides an intracellular de novo source of dTMP, an essential precursor for DNA biosynthesis. The sequence is that of Thymidylate synthase from Neisseria gonorrhoeae.